Here is a 317-residue protein sequence, read N- to C-terminus: MKVLWAALLVTFLAGCQAKVEQVVETEPEPELRQQAEWQSGQRWELALGRFWDYLRWVQTLSEQVQEELLSSQVTQELTALMDETMKELKAYKSELEEQLTPVAEETRARLSKELQAAQARLGADMEDVRGRLVQYRGEVQAMLGQSTEELRARLASHLRKLRKRLLRDADDLQKRLAVYQAGAREGAERGVSAIRERLGPLVEQGRVRAATVGSVAGKPLQERAQAWGERLRARMEEMGSRTRDRLDEVKEQVAEVRAKLEEQAQQIRLQAEAFQARLKSWFEPLVEDMQRQWAGLVEKVQAAVGTSAAPVPSDNH.

A signal peptide spans 1 to 18 (MKVLWAALLVTFLAGCQA). Tandem repeats lie at residues 80–101 (ALMD…EQLT), 102–123 (PVAE…ARLG), 124–145 (ADME…AMLG), 146–167 (QSTE…KRLL), 168–189 (RDAD…EGAE), 190–211 (RGVS…VRAA), 212–233 (TVGS…ERLR), and 234–255 (ARME…EQVA). The interval 80-255 (ALMDETMKEL…RLDEVKEQVA (176 aa)) is 8 X 22 AA approximate tandem repeats. Methionine 143 is subject to Methionine sulfoxide. At serine 147 the chain carries Phosphoserine. Residues 158–168 (HLRKLRKRLLR) are LDL and other lipoprotein receptors binding. Residue 162-165 (LRKR) coordinates heparin. The interval 210–290 (AATVGSVAGK…SWFEPLVEDM (81 aa)) is lipid-binding and lipoprotein association. A heparin-binding site is contributed by 229–236 (GERLRARM). Positions 266-317 (QQIRLQAEAFQARLKSWFEPLVEDMQRQWAGLVEKVQAAVGTSAAPVPSDNH) are homooligomerization. The segment at 278–290 (RLKSWFEPLVEDM) is specificity for association with VLDL.

It belongs to the apolipoprotein A1/A4/E family. In terms of assembly, homotetramer. May interact with ABCA1; functionally associated with ABCA1 in the biogenesis of HDLs. May interact with APP/A4 amyloid-beta peptide; the interaction is extremely stable in vitro but its physiological significance is unclear. May interact with MAPT. May interact with MAP2. In the cerebrospinal fluid, interacts with secreted SORL1. Interacts with PMEL; this allows the loading of PMEL luminal fragment on ILVs to induce fibril nucleation. In terms of processing, APOE exists as multiple glycosylated and sialylated glycoforms within cells and in plasma. The extent of glycosylation and sialylation are tissue and context specific. Post-translationally, glycated in plasma VLDL. Phosphorylated by FAM20C in the extracellular medium.

It is found in the secreted. The protein resides in the extracellular space. The protein localises to the extracellular matrix. It localises to the extracellular vesicle. Its subcellular location is the endosome. It is found in the multivesicular body. Its function is as follows. APOE is an apolipoprotein, a protein associating with lipid particles, that mainly functions in lipoprotein-mediated lipid transport between organs via the plasma and interstitial fluids. APOE is a core component of plasma lipoproteins and is involved in their production, conversion and clearance. Apolipoproteins are amphipathic molecules that interact both with lipids of the lipoprotein particle core and the aqueous environment of the plasma. As such, APOE associates with chylomicrons, chylomicron remnants, very low density lipoproteins (VLDL) and intermediate density lipoproteins (IDL) but shows a preferential binding to high-density lipoproteins (HDL). It also binds a wide range of cellular receptors including the LDL receptor/LDLR, the LDL receptor-related proteins LRP1, LRP2 and LRP8 and the very low-density lipoprotein receptor/VLDLR that mediate the cellular uptake of the APOE-containing lipoprotein particles. Finally, APOE also has a heparin-binding activity and binds heparan-sulfate proteoglycans on the surface of cells, a property that supports the capture and the receptor-mediated uptake of APOE-containing lipoproteins by cells. A main function of APOE is to mediate lipoprotein clearance through the uptake of chylomicrons, VLDLs, and HDLs by hepatocytes. APOE is also involved in the biosynthesis by the liver of VLDLs as well as their uptake by peripheral tissues ensuring the delivery of triglycerides and energy storage in muscle, heart and adipose tissues. By participating in the lipoprotein-mediated distribution of lipids among tissues, APOE plays a critical role in plasma and tissues lipid homeostasis. APOE is also involved in two steps of reverse cholesterol transport, the HDLs-mediated transport of cholesterol from peripheral tissues to the liver, and thereby plays an important role in cholesterol homeostasis. First, it is functionally associated with ABCA1 in the biogenesis of HDLs in tissues. Second, it is enriched in circulating HDLs and mediates their uptake by hepatocytes. APOE also plays an important role in lipid transport in the central nervous system, regulating neuron survival and sprouting. In Pongo pygmaeus (Bornean orangutan), this protein is Apolipoprotein E (APOE).